A 393-amino-acid chain; its full sequence is NAD(P)H-quinone oxidoreductase subunit H, chloroplastic (393 aa).

It belongs to the complex I 49 kDa subunit family. As to quaternary structure, NDH is composed of at least 16 different subunits, 5 of which are encoded in the nucleus.

It localises to the plastid. Its subcellular location is the chloroplast thylakoid membrane. It catalyses the reaction a plastoquinone + NADH + (n+1) H(+)(in) = a plastoquinol + NAD(+) + n H(+)(out). It carries out the reaction a plastoquinone + NADPH + (n+1) H(+)(in) = a plastoquinol + NADP(+) + n H(+)(out). Its function is as follows. NDH shuttles electrons from NAD(P)H:plastoquinone, via FMN and iron-sulfur (Fe-S) centers, to quinones in the photosynthetic chain and possibly in a chloroplast respiratory chain. The immediate electron acceptor for the enzyme in this species is believed to be plastoquinone. Couples the redox reaction to proton translocation, and thus conserves the redox energy in a proton gradient. The chain is NAD(P)H-quinone oxidoreductase subunit H, chloroplastic from Nandina domestica (Heavenly bamboo).